The primary structure comprises 192 residues: Apoptosis regulator BAX (192 aa).

M1 carries the N-acetylmethionine modification. The short motif at 59-73 (LSECLKRIGDELDSN) is the BH3 element. Residues 98–118 (EMFSDGNFNWGRVVALFYFAS) carry the BH1 motif. A Glycyl lysine isopeptide (Lys-Gly) (interchain with G-Cter in ubiquitin) cross-link involves residue K128. A BH2 motif is present at residues 150–165 (GWIQDQGGWDGLLSYF). Residues 172–192 (TVTIFVAGVLTASLTIWKKMG) form a helical membrane-spanning segment. K190 is covalently cross-linked (Glycyl lysine isopeptide (Lys-Gly) (interchain with G-Cter in ubiquitin)).

This sequence belongs to the Bcl-2 family. As to quaternary structure, homodimer. Forms higher oligomers under stress conditions. Forms heterooligomers with BAK. Interacts with BCL2L11. Interaction with BCL2L11 promotes BAX oligomerization and association with mitochondrial membranes, with subsequent release of cytochrome c. Forms heterodimers with BCL2, BCL2L1 isoform Bcl-X(L), BCL2L2, MCL1 and A1. Interacts with SH3GLB1. Interacts with SFN and YWHAZ; the interaction occurs in the cytoplasm. Under stress conditions, JNK-mediated phosphorylation of SFN and YWHAZ, releases BAX to mitochondria. Interacts with RNF144B, which regulates the ubiquitin-dependent stability of BAX. Interacts with CLU under stress conditions that cause a conformation change leading to BAX oligomerization and association with mitochondria. Does not interact with CLU in unstressed cells. Interacts with FAIM2/LFG2. Interacts with RTL10/BOP. Interacts (via a C-terminal 33 residues) with NOL3 (via CARD domain); inhibits BAX activation and translocation and consequently cytochrome c release from mitochondria. Interacts with GIMAP3/IAN4 and GIMAP5/IAN5; this interaction is increased, when cells initiate apoptosis upon IL2 withdrawal. Interacts with IRF3; the interaction is direct, increases upon Sendai virus infection and mediates the formation of the apoptosis complex TOMM70:HSP90AA1:IRF3:BAX. Interacts with MOAP1, facilitating BAX-dependent mitochondrial outer membrane permeabilization and apoptosis. Interacts with BCL2L10/BCL-B. Interacts with non-acetylated XRCC6/Ku70; this interaction leads to BAX sequestration in the cytosol, away from the mitochondria, preventing BAX-mediated apoptosis. In terms of processing, ubiquitinated in the absence of XRCC6/Ku70. Ubiquitinated on Lys-128 and Lys-190. 'Lys-63'-linked polyubiquitin chains on Lys-128 are removed by USP12.

The protein localises to the mitochondrion outer membrane. The protein resides in the cytoplasm. Its subcellular location is the nucleus. Plays a role in the mitochondrial apoptotic process. Under normal conditions, BAX is largely cytosolic via constant retrotranslocation from mitochondria to the cytosol mediated by BCL2L1/Bcl-xL, which avoids accumulation of toxic BAX levels at the mitochondrial outer membrane (MOM). Under stress conditions, undergoes a conformation change that causes translocation to the mitochondrion membrane, leading to the release of cytochrome c that then triggers apoptosis. Promotes activation of CASP3, and thereby apoptosis. The polypeptide is Apoptosis regulator BAX (BAX) (Bos taurus (Bovine)).